The sequence spans 264 residues: Type III pantothenate kinase 2 (264 aa).

6-13 (DVGNTFTV) serves as a coordination point for ATP. Residues Tyr100 and 107-110 (GADR) each bind substrate. Catalysis depends on Asp109, which acts as the Proton acceptor. Residue Asp129 coordinates K(+). Thr132 provides a ligand contact to ATP. Residue Thr184 participates in substrate binding.

The protein belongs to the type III pantothenate kinase family. Homodimer. NH4(+) is required as a cofactor. Requires K(+) as cofactor.

It localises to the cytoplasm. The enzyme catalyses (R)-pantothenate + ATP = (R)-4'-phosphopantothenate + ADP + H(+). It functions in the pathway cofactor biosynthesis; coenzyme A biosynthesis; CoA from (R)-pantothenate: step 1/5. Catalyzes the phosphorylation of pantothenate (Pan), the first step in CoA biosynthesis. This is Type III pantothenate kinase 2 from Symbiobacterium thermophilum (strain DSM 24528 / JCM 14929 / IAM 14863 / T).